Consider the following 77-residue polypeptide: uncharacterized protein (77 aa).

Residues 57–76 form a helical membrane-spanning segment; the sequence is NSAVICTLIANLMAFFMLLT.

Its subcellular location is the membrane. This is an uncharacterized protein from Schizosaccharomyces pombe (strain 972 / ATCC 24843) (Fission yeast).